A 69-amino-acid polypeptide reads, in one-letter code: DNA-directed RNA polymerase subunit omega (69 aa).

Belongs to the RNA polymerase subunit omega family. As to quaternary structure, the RNAP catalytic core consists of 2 alpha, 1 beta, 1 beta' and 1 omega subunit. When a sigma factor is associated with the core the holoenzyme is formed, which can initiate transcription.

The enzyme catalyses RNA(n) + a ribonucleoside 5'-triphosphate = RNA(n+1) + diphosphate. Its function is as follows. Promotes RNA polymerase assembly. Latches the N- and C-terminal regions of the beta' subunit thereby facilitating its interaction with the beta and alpha subunits. This Hahella chejuensis (strain KCTC 2396) protein is DNA-directed RNA polymerase subunit omega.